The following is a 683-amino-acid chain: Kinesin-like protein KIF2B (683 aa).

Thr125 carries the post-translational modification Phosphothreonine; by PLK1. The stretch at 141–176 forms a coiled coil; that stretch reads LMTQRKSACLREIEKLQKQRERRRRLHREIRAQRAR. Residue Ser204 is modified to Phosphoserine; by PLK1. The Kinesin motor domain occupies 213 to 543; that stretch reads RICVCVRKRP…LRYANRVKEI (331 aa). 303–310 contributes to the ATP binding site; the sequence is GQTGSGKT. Positions 640–672 form a coiled coil; sequence QLLSILEKKIDILTEIRRKLKLLQADIQKENRH.

This sequence belongs to the TRAFAC class myosin-kinesin ATPase superfamily. Kinesin family. MCAK/KIF2 subfamily. Post-translationally, phosphorylation at Thr-125 by PLK1 is required for activity in the correction of kinetochore-microtubules attachment errors, while phosphorylation at Ser-204 also by PLK1 is required for the kinetochore localization and activity in prometaphase.

It is found in the cytoplasm. It localises to the cytoskeleton. Its subcellular location is the microtubule organizing center. The protein resides in the centrosome. The protein localises to the spindle. It is found in the chromosome. It localises to the centromere. Its subcellular location is the kinetochore. Plus end-directed microtubule-dependent motor required for spindle assembly and chromosome movement during mitosis. Has microtubule depolymerization activity. Plays a role in chromosome congression. The protein is Kinesin-like protein KIF2B of Bos taurus (Bovine).